Here is a 242-residue protein sequence, read N- to C-terminus: Biosynthetic peptidoglycan transglycosylase (242 aa).

A helical membrane pass occupies residues 21–41; it reads VALVVFWGGGIALFSVVPVPF.

Belongs to the glycosyltransferase 51 family.

It is found in the cell inner membrane. The catalysed reaction is [GlcNAc-(1-&gt;4)-Mur2Ac(oyl-L-Ala-gamma-D-Glu-L-Lys-D-Ala-D-Ala)](n)-di-trans,octa-cis-undecaprenyl diphosphate + beta-D-GlcNAc-(1-&gt;4)-Mur2Ac(oyl-L-Ala-gamma-D-Glu-L-Lys-D-Ala-D-Ala)-di-trans,octa-cis-undecaprenyl diphosphate = [GlcNAc-(1-&gt;4)-Mur2Ac(oyl-L-Ala-gamma-D-Glu-L-Lys-D-Ala-D-Ala)](n+1)-di-trans,octa-cis-undecaprenyl diphosphate + di-trans,octa-cis-undecaprenyl diphosphate + H(+). The protein operates within cell wall biogenesis; peptidoglycan biosynthesis. Peptidoglycan polymerase that catalyzes glycan chain elongation from lipid-linked precursors. The polypeptide is Biosynthetic peptidoglycan transglycosylase (Salmonella arizonae (strain ATCC BAA-731 / CDC346-86 / RSK2980)).